A 734-amino-acid chain; its full sequence is Ribosomal RNA large subunit methyltransferase K/L (734 aa).

Residues 49–167 (HAYRICMWSR…KTEHTYCLDL (119 aa)) enclose the THUMP domain.

This sequence belongs to the methyltransferase superfamily. RlmKL family.

The protein localises to the cytoplasm. It carries out the reaction guanosine(2445) in 23S rRNA + S-adenosyl-L-methionine = N(2)-methylguanosine(2445) in 23S rRNA + S-adenosyl-L-homocysteine + H(+). It catalyses the reaction guanosine(2069) in 23S rRNA + S-adenosyl-L-methionine = N(2)-methylguanosine(2069) in 23S rRNA + S-adenosyl-L-homocysteine + H(+). Functionally, specifically methylates the guanine in position 2445 (m2G2445) and the guanine in position 2069 (m7G2069) of 23S rRNA. This chain is Ribosomal RNA large subunit methyltransferase K/L, found in Acinetobacter baumannii (strain ACICU).